The chain runs to 232 residues: LexA repressor (232 aa).

The disordered stretch occupies residues 1–25 (MSDDSSDSTDAPGTSRSRDSGLTER). Residues 16-25 (RSRDSGLTER) show a composition bias toward basic and acidic residues. The segment at residues 46 to 66 (IREIGDAVGLTSTSSVAHQLR) is a DNA-binding region (H-T-H motif). Active-site for autocatalytic cleavage activity residues include S156 and K193.

Belongs to the peptidase S24 family. As to quaternary structure, homodimer.

It carries out the reaction Hydrolysis of Ala-|-Gly bond in repressor LexA.. Represses a number of genes involved in the response to DNA damage (SOS response), including recA and lexA. In the presence of single-stranded DNA, RecA interacts with LexA causing an autocatalytic cleavage which disrupts the DNA-binding part of LexA, leading to derepression of the SOS regulon and eventually DNA repair. This is LexA repressor from Mycolicibacterium gilvum (strain PYR-GCK) (Mycobacterium gilvum (strain PYR-GCK)).